The sequence spans 80 residues: uncharacterized protein (80 aa).

This is an uncharacterized protein from Lepidoptera (butterflies and moths).